The following is a 534-amino-acid chain: MHEDAPKMSIAQSLAASTSQPKGDIVTEIPLEFAMSSMETKSIETTNVELKITYVDPTTGTGGEPGAYLPTAGTVCDQTDTKDVIEELCPVCGDKVSGYHYGLLTCESCKGFFKRTVQNKKVYTCVAERACHIDKTQRKRCPFCRFQKCLDVGMKLEAVRADRMRGGRNKFGPMYKRDRARKLQMMRQRQIAVQTLRGSLGDGGLVLGFGSPYTAVSVKQEIQIPQVSSLTSSPESSPGPALLGAQPQPPQPPPPPTHDKWEAHSPHSASPDAFTFDTQSNTAATPSSTAEATSTETLRVSPMIREFVQTVDDREWQNALFGLLQSQTYNQCEVDLFELMCKVLDQNLFSQVDWARNTVFFKYLKVDDQMKLLQDSWSVMLVLDHLHQRMHNGLPDETTLHNGQKFDLLCLGLLGVPSLADHFNELQNKLAELKFDVPDYICVKFMLLLNPEVRGIVNVKCVREGYQTVQAALLDYTLTCYPTIQDKFGKLVMVVPEIHALAARGEEHLYQRHCAGQAPTQTLLMEMLHAKRKS.

Positions 86-161 (EELCPVCGDK…VGMKLEAVRA (76 aa)) form a DNA-binding region, nuclear receptor. 2 consecutive NR C4-type zinc fingers follow at residues 89 to 109 (CPVC…CESC) and 125 to 149 (CVAE…FQKC). Over residues 227–246 (VSSLTSSPESSPGPALLGAQ) the composition is skewed to low complexity. Residues 227-296 (VSSLTSSPES…SSTAEATSTE (70 aa)) form a disordered region. Over residues 247–256 (PQPPQPPPPP) the composition is skewed to pro residues. Residues 278-296 (TQSNTAATPSSTAEATSTE) show a composition bias toward low complexity. An NR LBD domain is found at 299-531 (RVSPMIREFV…TLLMEMLHAK (233 aa)).

This sequence belongs to the nuclear hormone receptor family. NR5 subfamily. In terms of tissue distribution, present in all tissues examined.

It localises to the nucleus. May play an important role in development. This is Nuclear hormone receptor FTZ-F1 (FTZ-F1) from Bombyx mori (Silk moth).